We begin with the raw amino-acid sequence, 446 residues long: Homocitrate synthase, mitochondrial (446 aa).

Low complexity predominate over residues 1–14; it reads MCATDNAPAANAAP. The segment at 1–36 is disordered; the sequence is MCATDNAPAANAAPEKPSNVGVEVGHTGEQTNPYGA. The Pyruvate carboxyltransferase domain maps to 48-307; that stretch reads FQLIESTLRE…HKLRDLENLV (260 aa). R56 contacts 2-oxoglutarate. E57 contributes to the Mg(2+) binding site. The 2-oxoglutarate site is built by H116, R176, and T210. The Mg(2+) site is built by H237 and H239. H334 (proton acceptor) is an active-site residue. The segment at 422–446 is disordered; sequence TPTVAATEGPAVEDEPAAKKAKTEE. The segment covering 437 to 446 has biased composition (basic and acidic residues); the sequence is PAAKKAKTEE.

This sequence belongs to the alpha-IPM synthase/homocitrate synthase family. Homocitrate synthase LYS20/LYS21 subfamily. The cofactor is Mg(2+). Mn(2+) is required as a cofactor.

The protein resides in the mitochondrion. It catalyses the reaction acetyl-CoA + 2-oxoglutarate + H2O = (2R)-homocitrate + CoA + H(+). Its pathway is amino-acid biosynthesis; L-lysine biosynthesis via AAA pathway; L-alpha-aminoadipate from 2-oxoglutarate: step 1/5. Functionally, catalyzes the aldol-type condensation of 2-oxoglutarate with acetyl-CoA to yield homocitrate. Carries out the first step of the alpha-aminoadipate (AAA) lysine biosynthesis pathway. The protein is Homocitrate synthase, mitochondrial (LYS1) of Yarrowia lipolytica (strain CLIB 122 / E 150) (Yeast).